Here is a 311-residue protein sequence, read N- to C-terminus: Protein nfe2 (311 aa).

Its function is as follows. Responsible for the nodulation efficiency and competitive ability of strain GR4 on alfalfa roots. The sequence is that of Protein nfe2 (nfe2) from Rhizobium meliloti (Ensifer meliloti).